The chain runs to 456 residues: 1,3-beta-glucanosyltransferase gas4 (456 aa).

The signal sequence occupies residues 1-25 (MGVANIIYALFLLGPSIFLKATAQT). A disulfide bond links cysteine 68 and cysteine 97. Positions 86, 156, 157, 197, and 202 each coordinate (1,3-beta-D-glucosyl)n. The active-site Proton donor is the glutamate 157. 2 cysteine pairs are disulfide-bonded: cysteine 211–cysteine 350 and cysteine 229–cysteine 260. An N-linked (GlcNAc...) asparagine glycan is attached at asparagine 248. Glutamate 257 acts as the Nucleophile in catalysis. Tyrosine 296 lines the (1,3-beta-D-glucosyl)n pocket. Disordered regions lie at residues 334–353 (NPKGDGGYKKAGSPSKCPAN) and 384–434 (IEGP…ESGS). 2 N-linked (GlcNAc...) asparagine glycosylation sites follow: asparagine 353 and asparagine 415. The span at 417-434 (TSTTSYTSGMTSSSESGS) shows a compositional bias: low complexity. Serine 432 carries GPI-anchor amidated serine lipidation. A propeptide spans 433 to 456 (GSSKIGVAFCQALFITVLIATLSF) (removed in mature form).

It belongs to the glycosyl hydrolase 72 family.

It localises to the cell membrane. Its function is as follows. Splits internally a 1,3-beta-glucan molecule and transfers the newly generated reducing end (the donor) to the non-reducing end of another 1,3-beta-glucan molecule (the acceptor) forming a 1,3-beta linkage, resulting in the elongation of 1,3-beta-glucan chains in the cell wall. Involved in spore wall assembly. The sequence is that of 1,3-beta-glucanosyltransferase gas4 (gas4) from Schizosaccharomyces pombe (strain 972 / ATCC 24843) (Fission yeast).